The sequence spans 363 residues: Chorismate synthase (363 aa).

Residues R48 and R54 each contribute to the NADP(+) site. FMN is bound by residues 125-127 (RSS), 237-238 (NA), G277, 292-296 (KPTSS), and R318.

The protein belongs to the chorismate synthase family. Homotetramer. FMNH2 serves as cofactor.

It carries out the reaction 5-O-(1-carboxyvinyl)-3-phosphoshikimate = chorismate + phosphate. The protein operates within metabolic intermediate biosynthesis; chorismate biosynthesis; chorismate from D-erythrose 4-phosphate and phosphoenolpyruvate: step 7/7. Catalyzes the anti-1,4-elimination of the C-3 phosphate and the C-6 proR hydrogen from 5-enolpyruvylshikimate-3-phosphate (EPSP) to yield chorismate, which is the branch point compound that serves as the starting substrate for the three terminal pathways of aromatic amino acid biosynthesis. This reaction introduces a second double bond into the aromatic ring system. The polypeptide is Chorismate synthase (Stutzerimonas stutzeri (strain A1501) (Pseudomonas stutzeri)).